A 226-amino-acid polypeptide reads, in one-letter code: Endonuclease V (226 aa).

Asp-43 and Asp-109 together coordinate Mg(2+).

The protein belongs to the endonuclease V family. The cofactor is Mg(2+).

Its subcellular location is the cytoplasm. It carries out the reaction Endonucleolytic cleavage at apurinic or apyrimidinic sites to products with a 5'-phosphate.. Its function is as follows. DNA repair enzyme involved in the repair of deaminated bases. Selectively cleaves double-stranded DNA at the second phosphodiester bond 3' to a deoxyinosine leaving behind the intact lesion on the nicked DNA. The protein is Endonuclease V of Kosmotoga olearia (strain ATCC BAA-1733 / DSM 21960 / TBF 19.5.1).